Here is a 340-residue protein sequence, read N- to C-terminus: MTELQPIAVLGGGSFGTALANLLAENGQRVLQWMRDPEQAGQMRRSGENPRYLKGVKLHPGIEPTSDLGAALQQAELVFVALPSSALRDALQPVAAQLSGKMLVSTTKGIEARTFKLMSEILEEIAPDARIGVLSGPNLAKEVADHALTATVIASEDEELCLRVQQALHGRTFRVYASADRFGVELGGALKNVYAIMSGMAAALGMGENTKSMLITRALAEMTRFAVKLGANPMTFLGLAGVGDLIVTCSSPKSRNYQVGFALGEGLSLDEAVQRLGEVAEGVNTLKVLKARAEELEVYMPLVAGLHAVLFEGRTLAQVIELLMRGEPKTDVDFIPTAGF.

Residues serine 14, phenylalanine 15, arginine 35, and lysine 108 each contribute to the NADPH site. Positions 108 and 136 each coordinate sn-glycerol 3-phosphate. Alanine 140 provides a ligand contact to NADPH. Residues lysine 191, aspartate 244, serine 254, arginine 255, and asparagine 256 each contribute to the sn-glycerol 3-phosphate site. Residue lysine 191 is the Proton acceptor of the active site. Arginine 255 is an NADPH binding site. Residues valine 279 and glutamate 281 each contribute to the NADPH site.

It belongs to the NAD-dependent glycerol-3-phosphate dehydrogenase family.

It localises to the cytoplasm. It catalyses the reaction sn-glycerol 3-phosphate + NAD(+) = dihydroxyacetone phosphate + NADH + H(+). It carries out the reaction sn-glycerol 3-phosphate + NADP(+) = dihydroxyacetone phosphate + NADPH + H(+). Its pathway is membrane lipid metabolism; glycerophospholipid metabolism. Catalyzes the reduction of the glycolytic intermediate dihydroxyacetone phosphate (DHAP) to sn-glycerol 3-phosphate (G3P), the key precursor for phospholipid synthesis. The polypeptide is Glycerol-3-phosphate dehydrogenase [NAD(P)+] (Ectopseudomonas mendocina (strain ymp) (Pseudomonas mendocina)).